Reading from the N-terminus, the 399-residue chain is Phosphoglycerate kinase (399 aa).

Substrate contacts are provided by residues 24–26 (DYN), arginine 39, 62–65 (HLGR), arginine 121, and arginine 154. ATP-binding positions include lysine 204, glycine 295, glutamate 326, and 355 to 358 (GGDS).

Belongs to the phosphoglycerate kinase family. As to quaternary structure, monomer.

The protein resides in the cytoplasm. It carries out the reaction (2R)-3-phosphoglycerate + ATP = (2R)-3-phospho-glyceroyl phosphate + ADP. The protein operates within carbohydrate degradation; glycolysis; pyruvate from D-glyceraldehyde 3-phosphate: step 2/5. The chain is Phosphoglycerate kinase from Elusimicrobium minutum (strain Pei191).